The primary structure comprises 156 residues: ATP synthase subunit b (156 aa).

Residues 7 to 29 (LLGQAIAFALFVWFCMKYVWPPI) traverse the membrane as a helical segment.

Belongs to the ATPase B chain family. In terms of assembly, F-type ATPases have 2 components, F(1) - the catalytic core - and F(0) - the membrane proton channel. F(1) has five subunits: alpha(3), beta(3), gamma(1), delta(1), epsilon(1). F(0) has three main subunits: a(1), b(2) and c(10-14). The alpha and beta chains form an alternating ring which encloses part of the gamma chain. F(1) is attached to F(0) by a central stalk formed by the gamma and epsilon chains, while a peripheral stalk is formed by the delta and b chains.

It localises to the cell inner membrane. Its function is as follows. F(1)F(0) ATP synthase produces ATP from ADP in the presence of a proton or sodium gradient. F-type ATPases consist of two structural domains, F(1) containing the extramembraneous catalytic core and F(0) containing the membrane proton channel, linked together by a central stalk and a peripheral stalk. During catalysis, ATP synthesis in the catalytic domain of F(1) is coupled via a rotary mechanism of the central stalk subunits to proton translocation. Component of the F(0) channel, it forms part of the peripheral stalk, linking F(1) to F(0). This chain is ATP synthase subunit b, found in Aliivibrio salmonicida (strain LFI1238) (Vibrio salmonicida (strain LFI1238)).